A 180-amino-acid chain; its full sequence is Endoribonuclease YbeY (180 aa).

His-149, His-153, and His-159 together coordinate Zn(2+).

It belongs to the endoribonuclease YbeY family. Requires Zn(2+) as cofactor.

It is found in the cytoplasm. In terms of biological role, single strand-specific metallo-endoribonuclease involved in late-stage 70S ribosome quality control and in maturation of the 3' terminus of the 16S rRNA. This Prochlorococcus marinus subsp. pastoris (strain CCMP1986 / NIES-2087 / MED4) protein is Endoribonuclease YbeY.